Here is a 177-residue protein sequence, read N- to C-terminus: Phycoerythrin beta subunit (177 aa).

(2R,3E)-phycocyanobilin is bound by residues Y18, K28, N35, and D39. Residues C50, D54, and C61 each contribute to the 15,16-dihydrobiliverdin site. (2R,3E)-phycocyanobilin contacts are provided by R77, C82, R84, and D85. The 15,16-dihydrobiliverdin site is built by R129, Q148, and K149. 3 residues coordinate (2R,3E)-phycocyanobilin: P154, G156, and C158.

It belongs to the phycobiliprotein family. As to quaternary structure, heterotetramer of 2 identical alpha chains and 2 identical beta chains which form 2 alpha-beta heterodimers within the heterotetramer. The two alpha-beta heterodimers are rotated to an open configuration in contrast to the closed configuration found in other cryptophyte species due to the insertion of a single amino acid, 'Asp-65', in a conserved region of the alpha chain. In the open form, the central chromophores are not in physical contact but are separated by a water-filled channel. Contains three phycocyanobilin chromophores and one 15,16-dihydrobiliverdin chromophore with binding of the phycocyanobilin chromophores mediated by both the alpha and beta subunits.

Its subcellular location is the plastid. The protein resides in the chloroplast thylakoid membrane. Light-harvesting photosynthetic bile pigment-protein from the phycobiliprotein complex. The chain is Phycoerythrin beta subunit from Hemiselmis virescens.